The sequence spans 90 residues: Co-chaperonin GroES (90 aa).

It belongs to the GroES chaperonin family. In terms of assembly, heptamer of 7 subunits arranged in a ring. Interacts with the chaperonin GroEL.

It localises to the cytoplasm. In terms of biological role, together with the chaperonin GroEL, plays an essential role in assisting protein folding. The GroEL-GroES system forms a nano-cage that allows encapsulation of the non-native substrate proteins and provides a physical environment optimized to promote and accelerate protein folding. GroES binds to the apical surface of the GroEL ring, thereby capping the opening of the GroEL channel. The sequence is that of Co-chaperonin GroES from Thermosipho africanus (strain TCF52B).